The sequence spans 59 residues: MFSNIGFPGLILILVAVLILFGPKKLPEIGKALGETLKEFKKSTKELTDEAFQEKEKNK.

Residues 1–21 (MFSNIGFPGLILILVAVLILF) form a helical membrane-spanning segment.

This sequence belongs to the TatA/E family. In terms of assembly, forms a complex with TatC.

The protein localises to the cell membrane. Part of the twin-arginine translocation (Tat) system that transports large folded proteins containing a characteristic twin-arginine motif in their signal peptide across membranes. TatA could form the protein-conducting channel of the Tat system. The polypeptide is Sec-independent protein translocase protein TatA (Bacillus mycoides (strain KBAB4) (Bacillus weihenstephanensis)).